A 422-amino-acid polypeptide reads, in one-letter code: Beta-1,3-galactosyltransferase 2 (422 aa).

The Cytoplasmic portion of the chain corresponds to 1-24 (MLQWRRRHCCFAKMTWNAKRSLFR). Residues 25–45 (THLIGVLSLVFLFAMFLFFNH) form a helical; Signal-anchor for type II membrane protein membrane-spanning segment. Over 46–422 (HDWLPGRAGF…AGRYRHRKLH (377 aa)) the chain is Lumenal. Asparagine 75, asparagine 100, asparagine 119, asparagine 176, and asparagine 226 each carry an N-linked (GlcNAc...) asparagine glycan. Residues 90–110 (TLRPQTATNSNNTDLSPQGVT) are disordered.

This sequence belongs to the glycosyltransferase 31 family. Mn(2+) serves as cofactor. In terms of tissue distribution, detected in heart and brain.

The protein resides in the golgi apparatus membrane. It carries out the reaction an N-acetyl-beta-D-glucosaminyl derivative + UDP-alpha-D-galactose = a beta-D-galactosyl-(1-&gt;3)-N-acetyl-beta-D-glucosaminyl derivative + UDP + H(+). The enzyme catalyses a beta-D-GlcNAc-(1-&gt;3)-beta-D-Gal-(1-&gt;4)-beta-D-Glc-(1&lt;-&gt;1)-Cer(d18:1(4E)) + UDP-alpha-D-galactose = a beta-D-Gal-(1-&gt;3)-beta-D-GlcNAc-(1-&gt;3)-beta-D-Gal-(1-&gt;4)-beta-D-Glc-(1&lt;-&gt;1')-Cer(d18:1(4E)) + UDP + H(+). It catalyses the reaction a neolactoside IV(3)-beta-GlcNAc-nLc4Cer(d18:1(4E)) + UDP-alpha-D-galactose = a neolactoside IV(3)-beta-[Gal-beta-(1-&gt;3)-GlcNAc]-nLc4Cer(d18:1(4E)) + UDP + H(+). The protein operates within protein modification; protein glycosylation. In terms of biological role, beta-1,3-galactosyltransferase that transfers galactose from UDP-galactose to substrates with a terminal beta-N-acetylglucosamine (beta-GlcNAc) residue. Can also utilize substrates with a terminal galactose residue, albeit with lower efficiency. Involved in the biosynthesis of the carbohydrate moieties of glycolipids and glycoproteins. Inactive towards substrates with terminal alpha-N-acetylglucosamine (alpha-GlcNAc) or alpha-N-acetylgalactosamine (alpha-GalNAc) residues. This Homo sapiens (Human) protein is Beta-1,3-galactosyltransferase 2.